We begin with the raw amino-acid sequence, 812 residues long: Leucine--tRNA ligase (812 aa).

Residues 40-51 (SYPSGSNLHAGH) carry the 'HIGH' region motif. The short motif at 572–576 (KMSKS) is the 'KMSKS' region element. Position 575 (Lys-575) interacts with ATP.

The protein belongs to the class-I aminoacyl-tRNA synthetase family.

It localises to the cytoplasm. The catalysed reaction is tRNA(Leu) + L-leucine + ATP = L-leucyl-tRNA(Leu) + AMP + diphosphate. This is Leucine--tRNA ligase from Clostridium tetani (strain Massachusetts / E88).